The primary structure comprises 229 residues: 2-C-methyl-D-erythritol 4-phosphate cytidylyltransferase (229 aa).

This sequence belongs to the IspD/TarI cytidylyltransferase family. IspD subfamily. In terms of assembly, homodimer.

It catalyses the reaction 2-C-methyl-D-erythritol 4-phosphate + CTP + H(+) = 4-CDP-2-C-methyl-D-erythritol + diphosphate. The protein operates within isoprenoid biosynthesis; isopentenyl diphosphate biosynthesis via DXP pathway; isopentenyl diphosphate from 1-deoxy-D-xylulose 5-phosphate: step 2/6. Catalyzes the formation of 4-diphosphocytidyl-2-C-methyl-D-erythritol from CTP and 2-C-methyl-D-erythritol 4-phosphate (MEP). This chain is 2-C-methyl-D-erythritol 4-phosphate cytidylyltransferase, found in Wigglesworthia glossinidia brevipalpis.